The chain runs to 347 residues: NADH-ubiquinone oxidoreductase chain 2 (347 aa).

Helical transmembrane passes span 13–33 (VFTG…WLGL), 55–75 (AAIK…MAIL), 96–116 (LMIV…FWVP), 122–142 (VPLT…ISIM), 151–171 (TNIL…GGLN), 178–198 (ILAY…PYNP), 199–219 (NITI…FLIL), 237–257 (LTWL…LPPL), 277–297 (IAPT…ARLI), and 326–346 (LPTL…ILSI).

It belongs to the complex I subunit 2 family. In terms of assembly, core subunit of respiratory chain NADH dehydrogenase (Complex I) which is composed of 45 different subunits. Interacts with TMEM242.

The protein localises to the mitochondrion inner membrane. It catalyses the reaction a ubiquinone + NADH + 5 H(+)(in) = a ubiquinol + NAD(+) + 4 H(+)(out). Its function is as follows. Core subunit of the mitochondrial membrane respiratory chain NADH dehydrogenase (Complex I) which catalyzes electron transfer from NADH through the respiratory chain, using ubiquinone as an electron acceptor. Essential for the catalytic activity and assembly of complex I. The protein is NADH-ubiquinone oxidoreductase chain 2 of Pongo pygmaeus (Bornean orangutan).